We begin with the raw amino-acid sequence, 629 residues long: uncharacterized protein (629 aa).

Polar residues predominate over residues 1-11; the sequence is MSDDQQNGKQN. Disordered stretches follow at residues 1 to 24, 62 to 87, 197 to 464, and 493 to 560; these read MSDD…EQDD, SNNN…SNYN, SEES…SSLI, and PTPT…STPD. Over residues 247-264 the composition is skewed to low complexity; sequence PSSSSSSSSLINSPTTSK. Positions 274–288 are enriched in polar residues; sequence PTINPKSLFGLSSTI. Residues 294 to 430 are compositionally biased toward basic and acidic residues; it reads VKTEKEKEKE…DETLNKETPH (137 aa). Composition is skewed to low complexity over residues 434 to 464 and 493 to 554; these read PHIT…SSLI and PTPT…NNNN.

This is an uncharacterized protein from Dictyostelium discoideum (Social amoeba).